Here is a 208-residue protein sequence, read N- to C-terminus: Glycerol-3-phosphate acyltransferase (208 aa).

The next 5 membrane-spanning stretches (helical) occupy residues 3-23, 51-71, 78-98, 115-135, and 140-160; these read ILLAALVAYLIGSVSFAVVVS, KAAILTLVGDAFKGWIAVWLA, DVAIAWVAIAVFLGHLYPVFF, AVHPVLGLATALTWLIVAFFF, and LAALVAAVFAPVFDVFLFGMP.

It belongs to the PlsY family. Probably interacts with PlsX.

The protein resides in the cell inner membrane. The enzyme catalyses an acyl phosphate + sn-glycerol 3-phosphate = a 1-acyl-sn-glycero-3-phosphate + phosphate. It functions in the pathway lipid metabolism; phospholipid metabolism. Functionally, catalyzes the transfer of an acyl group from acyl-phosphate (acyl-PO(4)) to glycerol-3-phosphate (G3P) to form lysophosphatidic acid (LPA). This enzyme utilizes acyl-phosphate as fatty acyl donor, but not acyl-CoA or acyl-ACP. In Burkholderia orbicola (strain MC0-3), this protein is Glycerol-3-phosphate acyltransferase.